Here is a 229-residue protein sequence, read N- to C-terminus: Echinolectin 1 (229 aa).

N94 carries an N-linked (GlcNAc...) asparagine glycan.

It is found in the secreted. The chain is Echinolectin 1 from Echinometra lucunter (Rock-boring urchin).